We begin with the raw amino-acid sequence, 591 residues long: V-type ATP synthase alpha chain (591 aa).

Position 231-238 (231-238 (GPFGSGKT)) interacts with ATP.

It belongs to the ATPase alpha/beta chains family.

The catalysed reaction is ATP + H2O + 4 H(+)(in) = ADP + phosphate + 5 H(+)(out). Produces ATP from ADP in the presence of a proton gradient across the membrane. The V-type alpha chain is a catalytic subunit. This chain is V-type ATP synthase alpha chain, found in Clostridium novyi (strain NT).